The sequence spans 67 residues: Conotoxin TsMMSK-011 (67 aa).

Residues 1–20 (MMSKLGVLLTICLLLFPLTA) form the signal peptide. A propeptide spanning residues 21-50 (VQLDGDQPADLPALRTQDISTDHSPWFDPV) is cleaved from the precursor. 3 cysteine pairs are disulfide-bonded: Cys-53-Cys-65, Cys-54-Cys-61, and Cys-58-Cys-64. Pro-63 bears the 4-hydroxyproline mark.

It belongs to the conotoxin M superfamily. Expressed by the venom duct.

It is found in the secreted. The chain is Conotoxin TsMMSK-011 from Conus tessulatus (Tessellate cone).